The sequence spans 119 residues: MTKSELIAALAARYPQLAARDTDYAVKTMLDAMTQALASGQRIEIRGFGSFSLSQRSPRVGRNPKSGEQVLVPGKQVPHFKAGKELRERVDLAGGLADTQPDGDAPDQPQPTLLGLHAM.

The segment at 93–119 is disordered; it reads AGGLADTQPDGDAPDQPQPTLLGLHAM. Over residues 97-112 the composition is skewed to low complexity; that stretch reads ADTQPDGDAPDQPQPT.

The protein belongs to the bacterial histone-like protein family. As to quaternary structure, heterodimer of an alpha and a beta chain.

Its function is as follows. This protein is one of the two subunits of integration host factor, a specific DNA-binding protein that functions in genetic recombination as well as in transcriptional and translational control. This chain is Integration host factor subunit beta, found in Bordetella petrii (strain ATCC BAA-461 / DSM 12804 / CCUG 43448).